The chain runs to 97 residues: U6-theraphotoxin-Hhn1a 1 (97 aa).

The first 33 residues, Met1–Ala33, serve as a signal peptide directing secretion. A propeptide spanning residues Ser34–Arg61 is cleaved from the precursor. Intrachain disulfides connect Cys63-Cys77, Cys70-Cys82, and Cys76-Cys89.

Belongs to the neurotoxin 10 (Hwtx-1) family. 12 (Hntx-12) subfamily. In terms of tissue distribution, expressed by the venom gland.

The protein localises to the secreted. Functionally, ion channel inhibitor. The polypeptide is U6-theraphotoxin-Hhn1a 1 (Cyriopagopus hainanus (Chinese bird spider)).